We begin with the raw amino-acid sequence, 267 residues long: Large ribosomal subunit protein mL57 (267 aa).

A compositionally biased stretch (low complexity) spans 43–54 (SSSAVQQEQDAS). The tract at residues 43–73 (SSSAVQQEQDASGTSSSQQPRPRWSYTPERM) is disordered.

The protein belongs to the ribonuclease III family. Mitochondrion-specific ribosomal protein mL57 subfamily. As to quaternary structure, component of the mitochondrial large ribosomal subunit (mt-LSU). Mature N.crassa 74S mitochondrial ribosomes consist of a small (37S) and a large (54S) subunit. The 37S small subunit contains a 16S ribosomal RNA (16S mt-rRNA) and 32 different proteins. The 54S large subunit contains a 23S rRNA (23S mt-rRNA) and 42 different proteins. mL57 forms a heterodimer with mL44 and stabilizes rRNA expansion segments 1/2 at a membrane-facing protuberance close to the point of attachment of the ribosome to the translocon in the membrane.

Its subcellular location is the mitochondrion. In terms of biological role, component of the mitochondrial ribosome (mitoribosome), a dedicated translation machinery responsible for the synthesis of mitochondrial genome-encoded proteins, including at least some of the essential transmembrane subunits of the mitochondrial respiratory chain. The mitoribosomes are attached to the mitochondrial inner membrane and translation products are cotranslationally integrated into the membrane. The sequence is that of Large ribosomal subunit protein mL57 (mrpl15) from Neurospora crassa (strain ATCC 24698 / 74-OR23-1A / CBS 708.71 / DSM 1257 / FGSC 987).